Reading from the N-terminus, the 145-residue chain is uncharacterized protein (145 aa).

Belongs to the asfivirus K145R family.

The protein resides in the virion. This is an uncharacterized protein from Ornithodoros (relapsing fever ticks).